Reading from the N-terminus, the 104-residue chain is Large ribosomal subunit protein uL24 (104 aa).

This sequence belongs to the universal ribosomal protein uL24 family. In terms of assembly, part of the 50S ribosomal subunit.

Its function is as follows. One of two assembly initiator proteins, it binds directly to the 5'-end of the 23S rRNA, where it nucleates assembly of the 50S subunit. One of the proteins that surrounds the polypeptide exit tunnel on the outside of the subunit. The sequence is that of Large ribosomal subunit protein uL24 from Salmonella paratyphi A (strain ATCC 9150 / SARB42).